A 537-amino-acid chain; its full sequence is Pancreatic secretory granule membrane major glycoprotein GP2 (537 aa).

The signal sequence occupies residues Met1–Ala28. The tract at residues Ser41–Phe60 is beta hairpin. 11 disulfide bridges follow: Cys48-Cys59, Cys63-Cys157, Cys85-Cys172, Cys107-Cys145, Cys113-Cys177, Cys138-Cys146, Cys190-Cys200, Cys194-Cys209, Cys211-Cys241, Cys229-Cys320, and Cys261-Cys284. Residues Asp61–Gly81 are D10C. A glycan (N-linked (GlcNAc...) (high mannose) asparagine) is linked at Asn65. 3 N-linked (GlcNAc...) asparagine glycosylation sites follow: Asn88, Asn122, and Asn134. In terms of domain architecture, EGF-like spans Val186–Gly230. Residues Asn204, Asn216, and Asn260 are each glycosylated (N-linked (GlcNAc...) asparagine). Residues Asp228 to Ala321 are ZP-N. Positions Asp228–Ser484 constitute a ZP domain. N-linked (GlcNAc...) asparagine glycans are attached at residues Asn291 and Asn342. The tract at residues Tyr322–Val345 is flexible ZP-N/ZP-C linker. Positions Asp346 to Leu357 are internal hydrophobic patch (IHP). The ZP-C stretch occupies residues Asp346 to Ser484. N-linked (GlcNAc...) asparagine glycosylation occurs at Asn362. Disulfide bonds link Cys401–Cys461, Cys422–Cys477, and Cys466–Cys473. Residues Leu491–Pro499 form an external hydrophobic patch (EHP) region. The GPI-anchor amidated asparagine moiety is linked to residue Asn512. Positions Gly513–Phe537 are cleaved as a propeptide — removed in mature form.

Interacts with SYCN. Interacts with bacterial adhesin fimH. N-glycosylated. Glycosylated Asn-65 may be required for interaction with bacterial adhesin fimH. In terms of tissue distribution, expressed in pancreas (at protein level). Specifically expressed by M (microfold) cells which are atypical epithelial cells of the intestine (at protein level).

It localises to the zymogen granule membrane. Its subcellular location is the secreted. It is found in the cell membrane. The protein resides in the apical cell membrane. The protein localises to the membrane raft. It localises to the endosome. Functionally, functions as an intestinal M-cell transcytotic receptor specific for type-I-piliated bacteria that participates in the mucosal immune response toward these bacteria. At the apical membrane of M-cells it binds fimH, a protein of the bacteria type I pilus tip. Internalizes bound bacteria, like E.coli and S.typhimurium, from the lumen of the intestine and delivers them, through M-cells, to the underlying organized lymphoid follicles where they are captured by antigen-presenting dendritic cells to elicit a mucosal immune response. The protein is Pancreatic secretory granule membrane major glycoprotein GP2 of Homo sapiens (Human).